Reading from the N-terminus, the 201-residue chain is Holliday junction branch migration complex subunit RuvA (201 aa).

Positions 1 to 63 are domain I; sequence MYDYIKGTVT…EDNISLFGFQ (63 aa). Residues 64–142 are domain II; it reads TTEERYLFKK…DVVASEIVYV (79 aa). Positions 143 to 153 are flexible linker; it reads APENDMVAGLS. The domain III stretch occupies residues 153–201; that stretch reads SPQLEEAVLALEALGYSTRELKKVIPKLAKEEDLTSDAYIKLALQLMTK.

The protein belongs to the RuvA family. Homotetramer. Forms an RuvA(8)-RuvB(12)-Holliday junction (HJ) complex. HJ DNA is sandwiched between 2 RuvA tetramers; dsDNA enters through RuvA and exits via RuvB. An RuvB hexamer assembles on each DNA strand where it exits the tetramer. Each RuvB hexamer is contacted by two RuvA subunits (via domain III) on 2 adjacent RuvB subunits; this complex drives branch migration. In the full resolvosome a probable DNA-RuvA(4)-RuvB(12)-RuvC(2) complex forms which resolves the HJ.

It is found in the cytoplasm. Functionally, the RuvA-RuvB-RuvC complex processes Holliday junction (HJ) DNA during genetic recombination and DNA repair, while the RuvA-RuvB complex plays an important role in the rescue of blocked DNA replication forks via replication fork reversal (RFR). RuvA specifically binds to HJ cruciform DNA, conferring on it an open structure. The RuvB hexamer acts as an ATP-dependent pump, pulling dsDNA into and through the RuvAB complex. HJ branch migration allows RuvC to scan DNA until it finds its consensus sequence, where it cleaves and resolves the cruciform DNA. The sequence is that of Holliday junction branch migration complex subunit RuvA from Listeria monocytogenes serotype 4a (strain HCC23).